Here is a 400-residue protein sequence, read N- to C-terminus: uncharacterized protein (400 aa).

Residues 112–126 are compositionally biased toward basic and acidic residues; that stretch reads SESTAQIEKKPRKPL. Positions 112–151 are disordered; sequence SESTAQIEKKPRKPLDSVGLLEGDRNKRKKSPQMNDFNIK.

This is an uncharacterized protein from Homo sapiens (Human).